A 34-amino-acid polypeptide reads, in one-letter code: Photosystem I reaction center subunit XII (34 aa).

A helical transmembrane segment spans residues valine 4 to alanine 24.

The protein belongs to the PsaM family.

It localises to the cellular thylakoid membrane. This Synechococcus sp. (strain CC9605) protein is Photosystem I reaction center subunit XII.